The primary structure comprises 160 residues: Ribosomal RNA large subunit methyltransferase H (160 aa).

S-adenosyl-L-methionine is bound by residues G108 and 127–132; that span reads FGKMTW.

The protein belongs to the RNA methyltransferase RlmH family. In terms of assembly, homodimer.

The protein localises to the cytoplasm. It carries out the reaction pseudouridine(1915) in 23S rRNA + S-adenosyl-L-methionine = N(3)-methylpseudouridine(1915) in 23S rRNA + S-adenosyl-L-homocysteine + H(+). Its function is as follows. Specifically methylates the pseudouridine at position 1915 (m3Psi1915) in 23S rRNA. This Beijerinckia indica subsp. indica (strain ATCC 9039 / DSM 1715 / NCIMB 8712) protein is Ribosomal RNA large subunit methyltransferase H.